Here is a 159-residue protein sequence, read N- to C-terminus: Phosphopantetheine adenylyltransferase (159 aa).

Thr10 contacts substrate. Residues 10-11 (TF) and His18 each bind ATP. The substrate site is built by Lys42, Leu74, and Arg88. ATP contacts are provided by residues 89 to 91 (GLR), Glu99, and 124 to 130 (NAFISSS).

This sequence belongs to the bacterial CoaD family. As to quaternary structure, homohexamer. Requires Mg(2+) as cofactor.

It localises to the cytoplasm. The enzyme catalyses (R)-4'-phosphopantetheine + ATP + H(+) = 3'-dephospho-CoA + diphosphate. The protein operates within cofactor biosynthesis; coenzyme A biosynthesis; CoA from (R)-pantothenate: step 4/5. Functionally, reversibly transfers an adenylyl group from ATP to 4'-phosphopantetheine, yielding dephospho-CoA (dPCoA) and pyrophosphate. This chain is Phosphopantetheine adenylyltransferase, found in Campylobacter fetus subsp. fetus (strain 82-40).